Here is a 127-residue protein sequence, read N- to C-terminus: Large ribosomal subunit protein bL19 (127 aa).

Belongs to the bacterial ribosomal protein bL19 family.

Functionally, this protein is located at the 30S-50S ribosomal subunit interface and may play a role in the structure and function of the aminoacyl-tRNA binding site. The polypeptide is Large ribosomal subunit protein bL19 (Trichodesmium erythraeum (strain IMS101)).